The chain runs to 314 residues: tRNA uridine(34) hydroxylase (314 aa).

The 95-residue stretch at 140-234 (ARDDVILIDT…YLEETPPDES (95 aa)) folds into the Rhodanese domain. Catalysis depends on Cys-194, which acts as the Cysteine persulfide intermediate.

This sequence belongs to the TrhO family.

It catalyses the reaction uridine(34) in tRNA + AH2 + O2 = 5-hydroxyuridine(34) in tRNA + A + H2O. Functionally, catalyzes oxygen-dependent 5-hydroxyuridine (ho5U) modification at position 34 in tRNAs. The chain is tRNA uridine(34) hydroxylase from Acinetobacter baumannii (strain SDF).